The following is a 231-amino-acid chain: Dephospho-CoA kinase domain-containing protein (231 aa).

The 205-residue stretch at 3–207 folds into the DPCK domain; it reads LVGLTGGIAS…RSMEYLPLRL (205 aa). Position 8-15 (8-15) interacts with ATP; that stretch reads GGIASGKS.

This sequence belongs to the CoaE family.

This is Dephospho-CoA kinase domain-containing protein (Dcakd) from Mus musculus (Mouse).